The chain runs to 490 residues: MYKQTVVIFLLCFFICVSCYEVPPAKLEAIWPKGLRVSLPDDGYSLFAFHGKLNEEMEGLEAGHWSRDITKSKGGRWTFNDKQAKLKIGDKIYFWTYVIKEGLGYRQDNGEWTVTGYVDEAGNPVAPTSQPDAVVTEPPAAITPATAIVTNPPTSQNTYPCEISVSMVSVPGFVCKGQLLFEDNFNKGIDKGNIWTTENMFPGEPDYPFNVYLYDNVHVRDGKLIITPTTLESKYGEDYVRQQLDLTQRCTGTIGTADCTRVASGPIILPPVITSKINTKNRFSFKYGRVEVRARMPTGDWLIPEILLEPRDRIYGIHSYASGLLRVACVKGNVEYSKTLYGGPILCDSEPYRNVNLKQKIGFDHWNKDFHNYTLEWRPDGISLFVDGEKYGDVTPPTDGFYGDAKKENVQAASQWLKGTSMAPLDDYFYISIGLDVGGVHEFPDSSTKPWQNKATKAMLNFWNNRDQWFPTWFKDTSSLQVDYVRVYAL.

The signal sequence occupies residues 1-19; that stretch reads MYKQTVVIFLLCFFICVSC. A CBM39 domain is found at 20 to 119; sequence YEVPPAKLEA…GEWTVTGYVD (100 aa). The GH16 domain occupies 152–490; sequence PPTSQNTYPC…QVDYVRVYAL (339 aa). An N-linked (GlcNAc...) asparagine glycan is attached at asparagine 372.

This sequence belongs to the insect beta-1,3-glucan binding protein family. Monomer. In terms of tissue distribution, hemolymph.

The protein localises to the secreted. Plays a role in the recognition of invading microorganisms activating the phenoloxidase cascade. Binds specifically to beta-1,3-glucan. Binds the Aspergillus niger cell wall component alpha-1,3-glucan, a fungal pathogen-associated molecular pattern (PAMP) that activates the host immune response. The protein is Beta-1,3-glucan-binding protein 1 of Galleria mellonella (Greater wax moth).